The sequence spans 167 residues: Leptin (167 aa).

Residues 1 to 21 form the signal peptide; that stretch reads MRCGSLCRFLWLWSCLSYIEA. C117 and C167 are joined by a disulfide.

This sequence belongs to the leptin family.

The protein localises to the secreted. In terms of biological role, key player in the regulation of energy balance and body weight control. Once released into the circulation, has central and peripheral effects by binding LEPR, found in many tissues, which results in the activation of several major signaling pathways. In the hypothalamus, acts as an appetite-regulating factor that induces a decrease in food intake and an increase in energy consumption by inducing anorexinogenic factors and suppressing orexigenic neuropeptides, also regulates bone mass and secretion of hypothalamo-pituitary-adrenal hormones. In the periphery, increases basal metabolism, influences reproductive function, regulates pancreatic beta-cell function and insulin secretion, is pro-angiogenic for endothelial cell and affects innate and adaptive immunity. In the arcuate nucleus of the hypothalamus, activates by depolarization POMC neurons inducing FOS and SOCS3 expression to release anorexigenic peptides and inhibits by hyperpolarization NPY neurons inducing SOCS3 with a consequent reduction on release of orexigenic peptides. In addition to its known satiety inducing effect, has a modulatory role in nutrient absorption. In the intestine, reduces glucose absorption by enterocytes by activating PKC and leading to a sequential activation of p38, PI3K and ERK signaling pathways which exerts an inhibitory effect on glucose absorption. Acts as a growth factor on certain tissues, through the activation of different signaling pathways increases expression of genes involved in cell cycle regulation such as CCND1, via JAK2-STAT3 pathway, or VEGFA, via MAPK1/3 and PI3K-AKT1 pathways. May also play an apoptotic role via JAK2-STAT3 pathway and up-regulation of BIRC5 expression. Pro-angiogenic, has mitogenic activity on vascular endothelial cells and plays a role in matrix remodeling by regulating the expression of matrix metalloproteinases (MMPs) and tissue inhibitors of metalloproteinases (TIMPs). In innate immunity, modulates the activity and function of neutrophils by increasing chemotaxis and the secretion of oxygen radicals. Increases phagocytosis by macrophages and enhances secretion of pro-inflammatory mediators. Increases cytotoxic ability of NK cells. Plays a pro-inflammatory role, in synergy with IL1B, by inducing NOS2 which promotes the production of IL6, IL8 and Prostaglandin E2, through a signaling pathway that involves JAK2, PI3K, MAP2K1/MEK1 and MAPK14/p38. In adaptive immunity, promotes the switch of memory T-cells towards T helper-1 cell immune responses. Increases CD4(+)CD25(-) T-cell proliferation and reduces autophagy during TCR (T-cell receptor) stimulation, through MTOR signaling pathway activation and BCL2 up-regulation. This is Leptin (LEP) from Phoca vitulina (Harbor seal).